The primary structure comprises 256 residues: Major prion protein (256 aa).

The signal sequence occupies residues 1–24 (MVKSHIGSWILVLFVAMWSDVGLC). The interaction with ADGRG6 stretch occupies residues 25–41 (KKRPKPGGGWNTGGSRY). Residues 25–233 (KKRPKPGGGW…ESEAYYQRRA (209 aa)) are interaction with GRB2, ERI3 and SYN1. Residues 28 to 110 (PKPGGGWNTG…QWNKPSKPKT (83 aa)) are disordered. 5 consecutive repeat copies span residues 54–62 (PQGGGGWGQ), 63–70 (PHGGGWGQ), 71–78 (PHGGGWGQ), 79–86 (PHGGGWGQ), and 87–95 (PHGGGGWGQ). The tract at residues 54–95 (PQGGGGWGQPHGGGWGQPHGGGWGQPHGGGWGQPHGGGGWGQ) is 5 X 8 AA tandem repeats of P-H-G-G-G-W-G-Q. A compositionally biased stretch (gly residues) spans 55–97 (QGGGGWGQPHGGGWGQPHGGGWGQPHGGGWGQPHGGGGWGQGG). Cu(2+) contacts are provided by histidine 64, glycine 65, glycine 66, histidine 72, glycine 73, glycine 74, histidine 80, glycine 81, glycine 82, histidine 88, glycine 90, and glycine 91. Cysteine 182 and cysteine 217 are oxidised to a cystine. Residues asparagine 184 and asparagine 200 are each glycosylated (N-linked (GlcNAc...) asparagine). Alanine 233 is lipidated: GPI-anchor amidated alanine. A propeptide spans 234-256 (SAILFSSPPVILLISFLIFLIVG) (removed in mature form).

The protein belongs to the prion family. In terms of assembly, monomer and homodimer. Has a tendency to aggregate into amyloid fibrils containing a cross-beta spine, formed by a steric zipper of superposed beta-strands. Soluble oligomers may represent an intermediate stage on the path to fibril formation. Copper binding may promote oligomerization. Interacts with GRB2, APP, ERI3/PRNPIP and SYN1. Mislocalized cytosolically exposed PrP interacts with MGRN1; this interaction alters MGRN1 subcellular location and causes lysosomal enlargement. Interacts with APP. Interacts with KIAA1191. Interacts with ADGRG6.

It localises to the cell membrane. It is found in the golgi apparatus. Its primary physiological function is unclear. May play a role in neuronal development and synaptic plasticity. May be required for neuronal myelin sheath maintenance. May promote myelin homeostasis through acting as an agonist for ADGRG6 receptor. May play a role in iron uptake and iron homeostasis. Soluble oligomers are toxic to cultured neuroblastoma cells and induce apoptosis (in vitro). Association with GPC1 (via its heparan sulfate chains) targets PRNP to lipid rafts. Also provides Cu(2+) or Zn(2+) for the ascorbate-mediated GPC1 deaminase degradation of its heparan sulfate side chains. The polypeptide is Major prion protein (PRNP) (Felis catus (Cat)).